A 560-amino-acid polypeptide reads, in one-letter code: Secreted RxLR effector protein 142 (560 aa).

A signal peptide spans 1-22 (MRRAYFVAIALLVAAGGKTAAG). 2 disordered regions span residues 48–73 (QSQN…ERTP) and 354–377 (INRP…LNNQ). A compositionally biased stretch (basic and acidic residues) spans 54-72 (ESRDPKDDLKLSAGNEERT). Positions 56-71 (RDPKDDLKLSAGNEER) match the RxLR-dEER motif. The span at 361–377 (GPSTNGATTSNGGLNNQ) shows a compositional bias: polar residues.

The protein belongs to the RxLR effector family.

It is found in the secreted. The protein localises to the host nucleus. Functionally, secreted effector that completely suppresses the host cell death induced by cell death-inducing proteins. This chain is Secreted RxLR effector protein 142, found in Plasmopara viticola (Downy mildew of grapevine).